We begin with the raw amino-acid sequence, 210 residues long: UPF0301 protein M446_6268 (210 aa).

Belongs to the UPF0301 (AlgH) family.

This chain is UPF0301 protein M446_6268, found in Methylobacterium sp. (strain 4-46).